The sequence spans 481 residues: Aspartyl/glutamyl-tRNA(Asn/Gln) amidotransferase subunit B (481 aa).

This sequence belongs to the GatB/GatE family. GatB subfamily. Heterotrimer of A, B and C subunits.

It carries out the reaction L-glutamyl-tRNA(Gln) + L-glutamine + ATP + H2O = L-glutaminyl-tRNA(Gln) + L-glutamate + ADP + phosphate + H(+). The catalysed reaction is L-aspartyl-tRNA(Asn) + L-glutamine + ATP + H2O = L-asparaginyl-tRNA(Asn) + L-glutamate + ADP + phosphate + 2 H(+). Functionally, allows the formation of correctly charged Asn-tRNA(Asn) or Gln-tRNA(Gln) through the transamidation of misacylated Asp-tRNA(Asn) or Glu-tRNA(Gln) in organisms which lack either or both of asparaginyl-tRNA or glutaminyl-tRNA synthetases. The reaction takes place in the presence of glutamine and ATP through an activated phospho-Asp-tRNA(Asn) or phospho-Glu-tRNA(Gln). This Marinomonas sp. (strain MWYL1) protein is Aspartyl/glutamyl-tRNA(Asn/Gln) amidotransferase subunit B.